The primary structure comprises 821 residues: MVDKDANNELDSIPLVSEQVTNGENGELNIKASESTVGSNGAVADHEESETNNQTAVDNTENDTLDKDKLDAQPNHNEQQREADLSDAFSVKIQDESVNDKTSEPDENKDTASRKSMDGILNLSENNLDATKPEASEQELNPSLHNLMSACQQGDLTKVSELISNGEVKANDTFSDGITALHWAAINNRLTIVKYLIENDHSKADPNLLGGELKASPLHWACRNGLVYIVDYFIVHTDADPTLRDSQSYNALHLAVHSSNITLIIYLLLSCCGSTSTSKQLYVDESDNCDRTSLHWAAYQGDLLTINALLKFGADVSKIDKNLFIPLHWAFMKGYKTVLKVLAGAGSNIFAKNDQGKDSFEVAKDMNCYDTWIKVLKECGRNPKNHWEMKTIYLNPKIGKLVTFFTPYIILPIMFQVCSFYNGFVIPKLFFSVVLFAGSIYILQKLVIPTYLAEEKAIPKSPLLAGIFSGTAFWCIVTWAFNIIPTLLFKKFISNLVLSAFIYLFVWSFFKAMFINPGYVPVPSDNSVTLDQVKDLIKIGRFDTDNFCVNTFVRKPLRSKYSRFNKKLIARFDHYCPWVYNDIGVRNHKLFVVFVYSLNLAVLLFTHLSIKLFKNTEKMSGYDSDDESQKCWLLSDELCVGYKSHHFQFNLMLWCLIQYIWIAFLCLVQTFQILKGLTTWEFSSLNNRLQTHNGYNHSTLPKDFDLTSSNTNRYNSPKQSNGLSICLKLIGLDQVVLAIKLGIKSIFSHTSSVETYDPLNEFEIPTDYGFRTNWLDFWFIGDIEWRNIFYLPIEGENNLNRTVVDYYKLYEYPPKLADVDA.

Residues 1-118 are disordered; it reads MVDKDANNEL…KDTASRKSMD (118 aa). The Cytoplasmic segment spans residues 1 to 400; that stretch reads MVDKDANNEL…TIYLNPKIGK (400 aa). Basic and acidic residues predominate over residues 93–117; the sequence is IQDESVNDKTSEPDENKDTASRKSM. ANK repeat units lie at residues 142–172, 176–205, 213–243, 247–277, 289–318, and 322–351; these read PSLH…KAND, DGIT…SKAD, LKAS…DPTL, QSYN…STST, CDRT…DVSK, and NLFI…NIFA. Residues 401–421 traverse the membrane as a helical segment; the sequence is LVTFFTPYIILPIMFQVCSFY. N422 is a topological domain (lumenal). A helical membrane pass occupies residues 423 to 443; that stretch reads GFVIPKLFFSVVLFAGSIYIL. Residues 444–463 lie on the Cytoplasmic side of the membrane; that stretch reads QKLVIPTYLAEEKAIPKSPL. A helical membrane pass occupies residues 464-484; it reads LAGIFSGTAFWCIVTWAFNII. Over 485–494 the chain is Lumenal; the sequence is PTLLFKKFIS. A helical membrane pass occupies residues 495 to 515; sequence NLVLSAFIYLFVWSFFKAMFI. Over 516–589 the chain is Cytoplasmic; that stretch reads NPGYVPVPSD…YNDIGVRNHK (74 aa). Residues 546 to 596 enclose the DHHC domain; the sequence is NFCVNTFVRKPLRSKYSRFNKKLIARFDHYCPWVYNDIGVRNHKLFVVFVY. C576 functions as the S-palmitoyl cysteine intermediate in the catalytic mechanism. The chain crosses the membrane as a helical span at residues 590–610; that stretch reads LFVVFVYSLNLAVLLFTHLSI. Topologically, residues 611 to 650 are lumenal; sequence KLFKNTEKMSGYDSDDESQKCWLLSDELCVGYKSHHFQFN. A helical transmembrane segment spans residues 651–671; it reads LMLWCLIQYIWIAFLCLVQTF. The Cytoplasmic segment spans residues 672–821; the sequence is QILKGLTTWE…YPPKLADVDA (150 aa).

The protein belongs to the DHHC palmitoyltransferase family. AKR/ZDHHC17 subfamily.

The protein localises to the early endosome membrane. It localises to the golgi apparatus membrane. It catalyses the reaction L-cysteinyl-[protein] + hexadecanoyl-CoA = S-hexadecanoyl-L-cysteinyl-[protein] + CoA. Functionally, palmitoyltransferase specific for casein kinase 1. The sequence is that of Palmitoyltransferase AKR1 (AKR1) from Debaryomyces hansenii (strain ATCC 36239 / CBS 767 / BCRC 21394 / JCM 1990 / NBRC 0083 / IGC 2968) (Yeast).